Consider the following 208-residue polypeptide: Holliday junction branch migration complex subunit RuvA (208 aa).

The tract at residues 1–69 (MIGFLQGYVV…EDQMVLFGFA (69 aa)) is domain I. The interval 70 to 148 (VVAERDLFRQ…EWRDQAGLKT (79 aa)) is domain II. Residues 149 to 159 (LPSAGPIDSVQ) form a flexible linker region. Positions 159–208 (QEDVEMTLLALGYTSQEVMRALQAVGQNTALAKNSDTEAWIREAIAWLSQ) are domain III.

Belongs to the RuvA family. Homotetramer. Forms an RuvA(8)-RuvB(12)-Holliday junction (HJ) complex. HJ DNA is sandwiched between 2 RuvA tetramers; dsDNA enters through RuvA and exits via RuvB. An RuvB hexamer assembles on each DNA strand where it exits the tetramer. Each RuvB hexamer is contacted by two RuvA subunits (via domain III) on 2 adjacent RuvB subunits; this complex drives branch migration. In the full resolvosome a probable DNA-RuvA(4)-RuvB(12)-RuvC(2) complex forms which resolves the HJ.

The protein resides in the cytoplasm. Its function is as follows. The RuvA-RuvB-RuvC complex processes Holliday junction (HJ) DNA during genetic recombination and DNA repair, while the RuvA-RuvB complex plays an important role in the rescue of blocked DNA replication forks via replication fork reversal (RFR). RuvA specifically binds to HJ cruciform DNA, conferring on it an open structure. The RuvB hexamer acts as an ATP-dependent pump, pulling dsDNA into and through the RuvAB complex. HJ branch migration allows RuvC to scan DNA until it finds its consensus sequence, where it cleaves and resolves the cruciform DNA. This chain is Holliday junction branch migration complex subunit RuvA, found in Acaryochloris marina (strain MBIC 11017).